The primary structure comprises 308 residues: Probable manganese-dependent inorganic pyrophosphatase (308 aa).

The Mn(2+) site is built by histidine 9, aspartate 13, aspartate 15, aspartate 75, histidine 97, and aspartate 149.

Belongs to the PPase class C family. Mn(2+) is required as a cofactor.

Its subcellular location is the cytoplasm. The enzyme catalyses diphosphate + H2O = 2 phosphate + H(+). This is Probable manganese-dependent inorganic pyrophosphatase from Bacillus pumilus (strain SAFR-032).